The primary structure comprises 401 residues: Chromate transport protein (401 aa).

12 consecutive transmembrane segments (helical) span residues 26-46, 67-87, 93-113, 124-144, 172-192, 214-234, 237-257, 272-294, 299-321, 330-350, 356-376, and 379-399; these read LVMY…ALAG, GLAL…IYLG, IVGA…MVLA, LTWM…IIAI, VITE…VWFW, AASG…GVFF, AGAF…GGVV, VAVA…YLVA, ACVA…APYF, ILAF…GAVI, SIVD…LLKF, and LSEP…YPLL.

This sequence belongs to the chromate ion transporter (CHR) (TC 2.A.51) family.

It is found in the cell inner membrane. This protein reduces chromate accumulation and is essential for chromate resistance. The protein is Chromate transport protein of Cupriavidus metallidurans (strain ATCC 43123 / DSM 2839 / NBRC 102507 / CH34) (Ralstonia metallidurans).